Here is a 381-residue protein sequence, read N- to C-terminus: Tryptophan--tRNA ligase (381 aa).

Residues 82–90 carry the 'HIGH' region motif; it reads PSLGMHIGH. The 'KMSKS' region motif lies at 254-258; the sequence is KMSSS.

The protein belongs to the class-I aminoacyl-tRNA synthetase family.

It localises to the cytoplasm. It carries out the reaction tRNA(Trp) + L-tryptophan + ATP = L-tryptophyl-tRNA(Trp) + AMP + diphosphate + H(+). In Sulfolobus acidocaldarius (strain ATCC 33909 / DSM 639 / JCM 8929 / NBRC 15157 / NCIMB 11770), this protein is Tryptophan--tRNA ligase.